The primary structure comprises 212 residues: Regulatory protein RecX (212 aa).

The protein belongs to the RecX family.

The protein resides in the cytoplasm. Its function is as follows. Modulates RecA activity. In Clostridium botulinum (strain Eklund 17B / Type B), this protein is Regulatory protein RecX.